The chain runs to 513 residues: L-arabinose transport ATP-binding protein AraG (513 aa).

2 ABC transporter domains span residues 6–243 (LEMR…GMVG) and 264–508 (VKNW…TKTA). 38–45 (GENGAGKS) contacts ATP.

The protein belongs to the ABC transporter superfamily.

The protein localises to the cell membrane. It catalyses the reaction L-arabinose(out) + ATP + H2O = L-arabinose(in) + ADP + phosphate + H(+). Its function is as follows. Part of the binding-protein-dependent transport system for L-arabinose. Probably responsible for energy coupling to the transport system. This Geobacillus stearothermophilus (Bacillus stearothermophilus) protein is L-arabinose transport ATP-binding protein AraG (araG).